The following is an 825-amino-acid chain: BEN domain-containing protein 3 (825 aa).

Residues 1–11 (MNSTEISEDVE) are compositionally biased toward acidic residues. The interval 1 to 35 (MNSTEISEDVEEVLKNNPVKAEGSDATLDCSRNSR) is disordered. Lysine 20 participates in a covalent cross-link: Glycyl lysine isopeptide (Lys-Gly) (interchain with G-Cter in SUMO); alternate. Lysine 20 is covalently cross-linked (Glycyl lysine isopeptide (Lys-Gly) (interchain with G-Cter in SUMO1); alternate). Residue lysine 20 forms a Glycyl lysine isopeptide (Lys-Gly) (interchain with G-Cter in SUMO2); alternate linkage. Residues lysine 39, lysine 54, lysine 56, lysine 71, lysine 126, lysine 127, lysine 135, lysine 140, lysine 156, and lysine 174 each participate in a glycyl lysine isopeptide (Lys-Gly) (interchain with G-Cter in SUMO2) cross-link. The tract at residues 52-122 (SSKRKQLDSD…EEEPSTEATV (71 aa)) is disordered. The Nuclear localization signal signature appears at 54-56 (KRK). The BEN 1 domain occupies 239-340 (PPPEYQLTAS…DFFSRFWAQR (102 aa)). Serine 376 bears the Phosphoserine mark. A BEN 2 domain is found at 384-484 (ASDHVVDTQD…DELEGLGLEG (101 aa)). Lysine 424 is covalently cross-linked (Glycyl lysine isopeptide (Lys-Gly) (interchain with G-Cter in SUMO2)). Serine 486 is subject to Phosphoserine. A Glycyl lysine isopeptide (Lys-Gly) (interchain with G-Cter in SUMO); alternate cross-link involves residue lysine 509. Lysine 509 is covalently cross-linked (Glycyl lysine isopeptide (Lys-Gly) (interchain with G-Cter in SUMO2); alternate). A Glycyl lysine isopeptide (Lys-Gly) (interchain with G-Cter in SUMO2) cross-link involves residue lysine 525. A BEN 3 domain is found at 547–647 (GSDCLLSKEQ…ERCRRRDTEQ (101 aa)). A Glycyl lysine isopeptide (Lys-Gly) (interchain with G-Cter in SUMO2) cross-link involves residue lysine 697. The BEN 4 domain occupies 712-813 (VPSPYLLSDK…ERCRRPNRKK (102 aa)).

Homooligomer, probably a homooctamer. Interacts with HDAC2 and HDAC3, but not HDAC1. Interacts with SALL4. Interacts with SMARCA5/SNF2H, BAZ2A/TIP5 and USP21. Interacts with the nucleosome remodeling and histone deacetylase (NuRD) repressor complex. Interacts (via BEN domains 1 and 3) with ERCC6L (via N-terminal TPR repeat); the interaction is direct. Sumoylated at Lys-20 by SUMO1 and at Lys-509 by SUMO1, SUMO2 and SUMO3. Sumoylation probably occurs sequentially, with that of Lys-20 preceding that of Lys-509. It does not alter association with heterochromatin, but is required for the repression of transcription.

Its subcellular location is the nucleus. It is found in the nucleolus. Transcriptional repressor which associates with the NoRC (nucleolar remodeling complex) complex and plays a key role in repressing rDNA transcription. The sumoylated form modulates the stability of the NoRC complex component BAZ2A/TIP5 by controlling its USP21-mediated deubiquitination. Binds to unmethylated major satellite DNA and is involved in the recruitment of the Polycomb repressive complex 2 (PRC2) to major satellites. Stimulates the ERCC6L translocase and ATPase activities. This Mus musculus (Mouse) protein is BEN domain-containing protein 3 (Bend3).